A 484-amino-acid polypeptide reads, in one-letter code: MIASQFLSALPLVLLLLRESGAWSYSASTETMTFDDASAYCQQRYTHLVAIQNHAEIEYLNSTFNYSASYYWIGIRKINGTWTWIGTKKALTPEATNWAPGEPNNKQSNEDCVEIYIKRDKDSGKWNDERCSKKKLALCYTAACTPTSCSGHGECIETINSSTCQCYPGFRGLQCEQVVECDALENPVNGVVTCPQSLPWNTTCAFECKEGFELIGPEHLQCTSSGSWDGKKPTCKAVTCDTVGHPQNGDVSCNHSSIGEFAYKSTCHFTCAEGFGLQGPAQIECTAQGQWTQQAPVCKAVKCPAVSQPKNGLVKFTHSPTGEFTYKSSCAFSCEEGFELRGSAQLACTSQGQWTQEVPSCQVVQCSSLEVPREINMSCSGEPVFGAVCTFACPEGWMLNGSVALTCGATGHWSGMLPTCEAPAESKIPLAMGLAAGGVSFMTSASFLLWLLKRLRKRAKKFVPSSSSECLQPNGSYQMPSDLI.

The first 22 residues, 1–22 (MIASQFLSALPLVLLLLRESGA), serve as a signal peptide directing secretion. Positions 23-140 (WSYSASTETM…CSKKKLALCY (118 aa)) constitute a C-type lectin domain. The Extracellular portion of the chain corresponds to 23 to 429 (WSYSASTETM…CEAPAESKIP (407 aa)). Cystine bridges form between Cys-41-Cys-139, Cys-112-Cys-131, Cys-144-Cys-155, Cys-149-Cys-164, Cys-166-Cys-175, Cys-181-Cys-222, Cys-194-Cys-204, Cys-208-Cys-235, Cys-240-Cys-285, Cys-271-Cys-298, Cys-303-Cys-348, Cys-334-Cys-361, Cys-366-Cys-407, and Cys-393-Cys-420. Residues Asn-61, Asn-65, and Asn-79 are each glycosylated (N-linked (GlcNAc...) asparagine). Ca(2+)-binding residues include Glu-102, Asn-104, and Glu-110. Residues 102 to 110 (EPNNKQSNE), 114 to 119 (EIYIKR), and 127 to 129 (NDE) contribute to the a carbohydrate site. 2 residues coordinate Ca(2+): Asn-127 and Asp-128. Residues 141-176 (TAACTPTSCSGHGECIETINSSTCQCYPGFRGLQCE) enclose the EGF-like domain. The N-linked (GlcNAc...) asparagine glycan is linked to Asn-160. Sushi domains follow at residues 179 to 237 (VECD…TCKA), 251 to 300 (VSCN…VCKA), 301 to 363 (VKCP…SCQV), and 364 to 422 (VQCS…TCEA). A glycan (N-linked (GlcNAc...) asparagine) is linked at Asn-201. N-linked (GlcNAc...) asparagine glycosylation is present at Asn-254. N-linked (GlcNAc...) asparagine glycosylation is found at Asn-376 and Asn-400. A helical transmembrane segment spans residues 430–451 (LAMGLAAGGVSFMTSASFLLWL). At 452 to 484 (LKRLRKRAKKFVPSSSSECLQPNGSYQMPSDLI) the chain is on the cytoplasmic side.

The protein belongs to the selectin/LECAM family. In terms of assembly, interacts with SELPLG/PSGL1 and PODXL2 through the sialyl Lewis X epitope. SELPLG sulfation appears not to be required for this interaction.

The protein localises to the cell membrane. Functionally, cell-surface glycoprotein having a role in immunoadhesion. Mediates in the adhesion of blood neutrophils in cytokine-activated endothelium through interaction with SELPLG/PSGL1. May have a role in capillary morphogenesis. The polypeptide is E-selectin (SELE) (Sus scrofa (Pig)).